We begin with the raw amino-acid sequence, 28 residues long: Cruzioseptin-3 (28 aa).

At Gln25 the chain carries Glutamine amide. Residues 27–28 (EQ) constitute a propeptide that is removed on maturation.

As to expression, expressed by the skin glands.

The protein localises to the secreted. Its function is as follows. Has antimicrobial activity against Gram-negative bacterium E.coli (MIC=13.32 uM), against Gram-positive bacterium S.aureus (MIC=13.32 uM) and against fungus C.albicans (MIC=13.32 uM). At higher concentrations also has a bactericidal and fungicidal effect. Has hemagglutinating activity against horse erythrocytes. This is Cruzioseptin-3 from Cruziohyla calcarifer (Splendid leaf frog).